We begin with the raw amino-acid sequence, 239 residues long: Sensory rhodopsin-1 (239 aa).

Residues 1–3 (MDA) are Extracellular-facing. A helical transmembrane segment spans residues 4–25 (VATAYLGGAVALIVGVAFVWLL). The Cytoplasmic segment spans residues 26 to 34 (YRSLDGSPH). The chain crosses the membrane as a helical span at residues 35-56 (QSALAPLAIIPVFAGLSYVGMA). Over 57–70 (YDIGTVIVNGNQIV) the chain is Extracellular. Residues 71–92 (GLRYIDWLVTTPILVGYVGYAA) traverse the membrane as a helical segment. Residues 93 to 95 (GAS) are Cytoplasmic-facing. A helical transmembrane segment spans residues 96-118 (RRSIIGVMVADALMIAVGAGAVV). The Extracellular segment spans residues 119-122 (TDGT). Residues 123–150 (LKWALFGVSSIFHLSLFAYLYVIFPRVV) traverse the membrane as a helical segment. Over 151-153 (PDV) the chain is Cytoplasmic. Residues 154 to 181 (PEQIGLFNLLKNHIGLLWLAYPLVWLFG) traverse the membrane as a helical segment. At 182-189 (PAGIGEAT) the chain is on the extracellular side. Residues 190–222 (AAGVALTYVFLDVLAKVPYVYFFYARRRVFMHS) form a helical membrane-spanning segment. Residue Lys205 is modified to N6-(retinylidene)lysine. At 223 to 239 (ESPPAPEQATVEATAAD) the chain is on the cytoplasmic side.

This sequence belongs to the archaeal/bacterial/fungal opsin family. Interacts with HTR-I.

The protein resides in the cell membrane. In terms of biological role, involved in the control of phototaxis. Mediates both photoattractant (in the orange light) and photophobic (in the near UV light) responses. The signal is then transmitted to the sensory rhodopsin I transducer (HTR-I). This is Sensory rhodopsin-1 (sopI) from Halobacterium salinarum (strain ATCC 29341 / DSM 671 / R1).